A 508-amino-acid polypeptide reads, in one-letter code: MAP kinase kinase MKK1/SSP32 (508 aa).

3 disordered regions span residues 1–21 (MASLFRPPESAKCNPNSPRLK), 35–95 (IYLT…LSIN), and 130–158 (ELSGNSDLTPSSMASPFSHTNTSSPYLRN). A compositionally biased stretch (polar residues) spans 35-47 (IYLTSNGSSTTAY). Low complexity predominate over residues 48-66 (SSHTPEPLTSSTSTLFSQT). Composition is skewed to polar residues over residues 67-79 (RLHPSDSSMTLNT) and 131-158 (LSGNSDLTPSSMASPFSHTNTSSPYLRN). The residue at position 192 (Ser-192) is a Phosphoserine. In terms of domain architecture, Protein kinase spans 221-488 (IETLGILGEG…PRQMINHPWI (268 aa)). ATP-binding positions include 227–235 (LGEGAGGSV) and Lys-250. Asp-349 acts as the Proton acceptor in catalysis.

It belongs to the protein kinase superfamily. STE Ser/Thr protein kinase family. MAP kinase kinase subfamily.

It carries out the reaction L-seryl-[protein] + ATP = O-phospho-L-seryl-[protein] + ADP + H(+). It catalyses the reaction L-threonyl-[protein] + ATP = O-phospho-L-threonyl-[protein] + ADP + H(+). The enzyme catalyses L-tyrosyl-[protein] + ATP = O-phospho-L-tyrosyl-[protein] + ADP + H(+). In terms of biological role, involved in a signal transduction pathway that play a role in yeast cell morphogenesis and cell growth. This pathway seems to start by SMP3; then involve the kinase PKC1 that may act on the BCK1 kinase that then phosphorylates MKK1 and MKK2 which themselves phosphorylate the MPK1 kinase. The protein is MAP kinase kinase MKK1/SSP32 (MKK1) of Saccharomyces cerevisiae (strain ATCC 204508 / S288c) (Baker's yeast).